Here is a 417-residue protein sequence, read N- to C-terminus: Tyrosine--tRNA ligase (417 aa).

Tyrosine 39 contributes to the L-tyrosine binding site. Positions 44–53 match the 'HIGH' region motif; that stretch reads PTAASLHAGG. L-tyrosine-binding residues include tyrosine 176 and glutamine 180. The 'KMSKS' region motif lies at 236–240; the sequence is KMGKS. ATP is bound at residue lysine 239. Residues 350–417 enclose the S4 RNA-binding domain; sequence LGLLTLLVRA…KKKHLLVRPV (68 aa).

Belongs to the class-I aminoacyl-tRNA synthetase family. TyrS type 1 subfamily. Homodimer.

It is found in the cytoplasm. It catalyses the reaction tRNA(Tyr) + L-tyrosine + ATP = L-tyrosyl-tRNA(Tyr) + AMP + diphosphate + H(+). Functionally, catalyzes the attachment of tyrosine to tRNA(Tyr) in a two-step reaction: tyrosine is first activated by ATP to form Tyr-AMP and then transferred to the acceptor end of tRNA(Tyr). This chain is Tyrosine--tRNA ligase, found in Rhizobium meliloti (strain 1021) (Ensifer meliloti).